Reading from the N-terminus, the 283-residue chain is Bifunctional protein FolD (283 aa).

Residues 163-165 (GRS), S188, and I229 contribute to the NADP(+) site.

Belongs to the tetrahydrofolate dehydrogenase/cyclohydrolase family. As to quaternary structure, homodimer.

The enzyme catalyses (6R)-5,10-methylene-5,6,7,8-tetrahydrofolate + NADP(+) = (6R)-5,10-methenyltetrahydrofolate + NADPH. It catalyses the reaction (6R)-5,10-methenyltetrahydrofolate + H2O = (6R)-10-formyltetrahydrofolate + H(+). The protein operates within one-carbon metabolism; tetrahydrofolate interconversion. In terms of biological role, catalyzes the oxidation of 5,10-methylenetetrahydrofolate to 5,10-methenyltetrahydrofolate and then the hydrolysis of 5,10-methenyltetrahydrofolate to 10-formyltetrahydrofolate. The protein is Bifunctional protein FolD of Latilactobacillus sakei subsp. sakei (strain 23K) (Lactobacillus sakei subsp. sakei).